The following is a 458-amino-acid chain: Dihydrolipoyllysine-residue acetyltransferase component of pyruvate dehydrogenase complex, mitochondrial (458 aa).

The transit peptide at 1-28 (MIVPVLSRQALRHASVARVALPSLTRWY) directs the protein to the mitochondrion. The 77-residue stretch at 34-110 (HTVVKMPALS…AVGNPIAILV (77 aa)) folds into the Lipoyl-binding domain. Position 75 is an N6-lipoyllysine (Lys-75). The tract at residues 126 to 164 (DAGGETSPAVPKDEPKNESTASAPTPAPTPAPEPENTSF) is disordered. The region spanning 177–214 (NALPAAKRLAREKGIDLRNVKGSGPGGKITEEDVKKAL) is the Peripheral subunit-binding (PSBD) domain. Catalysis depends on residues His-431 and Asp-435.

Belongs to the 2-oxoacid dehydrogenase family. (R)-lipoate is required as a cofactor.

The protein resides in the mitochondrion matrix. It carries out the reaction N(6)-[(R)-dihydrolipoyl]-L-lysyl-[protein] + acetyl-CoA = N(6)-[(R)-S(8)-acetyldihydrolipoyl]-L-lysyl-[protein] + CoA. In terms of biological role, the pyruvate dehydrogenase complex catalyzes the overall conversion of pyruvate to acetyl-CoA and CO(2). It contains multiple copies of three enzymatic components: pyruvate dehydrogenase (E1), dihydrolipoamide acetyltransferase (E2) and lipoamide dehydrogenase (E3). This is Dihydrolipoyllysine-residue acetyltransferase component of pyruvate dehydrogenase complex, mitochondrial (mrp-3) from Neurospora crassa (strain ATCC 24698 / 74-OR23-1A / CBS 708.71 / DSM 1257 / FGSC 987).